Here is a 343-residue protein sequence, read N- to C-terminus: tRNA N6-adenosine threonylcarbamoyltransferase (343 aa).

Fe cation-binding residues include His115 and His119. Residues 137–141 (LVSGG), Asp170, Gly183, Asp187, and Asn276 contribute to the substrate site. Asp306 provides a ligand contact to Fe cation.

Belongs to the KAE1 / TsaD family. It depends on Fe(2+) as a cofactor.

It localises to the cytoplasm. It carries out the reaction L-threonylcarbamoyladenylate + adenosine(37) in tRNA = N(6)-L-threonylcarbamoyladenosine(37) in tRNA + AMP + H(+). In terms of biological role, required for the formation of a threonylcarbamoyl group on adenosine at position 37 (t(6)A37) in tRNAs that read codons beginning with adenine. Is involved in the transfer of the threonylcarbamoyl moiety of threonylcarbamoyl-AMP (TC-AMP) to the N6 group of A37, together with TsaE and TsaB. TsaD likely plays a direct catalytic role in this reaction. This is tRNA N6-adenosine threonylcarbamoyltransferase from Limosilactobacillus reuteri (strain DSM 20016) (Lactobacillus reuteri).